The sequence spans 378 residues: Probable S-(hydroxymethyl)glutathione dehydrogenase 1 (378 aa).

Cys47 is a binding site for Zn(2+). His48 is a binding site for NAD(+). Positions 69, 70, 99, 102, 105, 113, and 176 each coordinate Zn(2+). Residues 201 to 206 (GCGCVG), Asp225, 293 to 295 (IGV), and 318 to 320 (SAF) contribute to the NAD(+) site.

This sequence belongs to the zinc-containing alcohol dehydrogenase family. Class-III subfamily. It depends on Zn(2+) as a cofactor.

The enzyme catalyses a primary alcohol + NAD(+) = an aldehyde + NADH + H(+). The catalysed reaction is a secondary alcohol + NAD(+) = a ketone + NADH + H(+). It carries out the reaction S-(hydroxymethyl)glutathione + NADP(+) = S-formylglutathione + NADPH + H(+). It catalyses the reaction S-(hydroxymethyl)glutathione + NAD(+) = S-formylglutathione + NADH + H(+). The enzyme catalyses S-nitrosoglutathione + NADH + H(+) = S-(hydroxysulfenamide)glutathione + NAD(+). Oxidizes long-chain alcohols and, in the presence of glutathione, is able to oxidize formaldehyde. Also acts as a S-nitroso-glutathione reductase by catalyzing the NADH-dependent reduction of S-nitrosoglutathione, thereby regulating protein S-nitrosylation. The polypeptide is Probable S-(hydroxymethyl)glutathione dehydrogenase 1 (Schizosaccharomyces pombe (strain 972 / ATCC 24843) (Fission yeast)).